The chain runs to 404 residues: Ammonium transporter (404 aa).

The next 9 membrane-spanning stretches (helical) occupy residues 7 to 27, 44 to 64, 96 to 116, 125 to 145, 158 to 178, 227 to 247, 254 to 274, 277 to 297, and 352 to 372; these read VFMF…ALFY, FSSI…LAFA, LFMM…SGAF, FLLF…HWVW, FAGG…LAIV, INTN…EWII, LGAV…AGFV, FASI…VFSL, and IVAI…IIKI.

It belongs to the ammonia transporter channel (TC 1.A.11.2) family. As to quaternary structure, interacts with NrgB for a correct localization of the latter. GlnK-AmtB complex interacts with TnrA.

It is found in the cell membrane. Its function is as follows. Functions as an ammonium and methylammonium transporter in the absence of glutamine. Required for ammonium utilization at low concentrations or at low pH values, when ammonium is the single nitrogen source. Required for binding of NrgB to the membrane. Interaction between GlnK-AmtB complex and TnrA protects TnrA from proteolytic degradation. The protein is Ammonium transporter of Bacillus subtilis (strain 168).